We begin with the raw amino-acid sequence, 88 residues long: Large ribosomal subunit protein uL29 (88 aa).

Belongs to the universal ribosomal protein uL29 family.

In Sulfurisphaera tokodaii (strain DSM 16993 / JCM 10545 / NBRC 100140 / 7) (Sulfolobus tokodaii), this protein is Large ribosomal subunit protein uL29 (rpl29).